Reading from the N-terminus, the 53-residue chain is Lantibiotic paenibacillin (53 aa).

A propeptide spanning residues 1–24 is cleaved from the precursor; that stretch reads MKVDQMFDLDLRKSYEASELSPQA. The residue at position 24 (Ala-24) is an N-acetylalanine. The residue at position 25 (Ser-25) is a 2,3-didehydroalanine (Ser). A 2,3-didehydrobutyrine mark is found at Thr-29 and Thr-30. Positions 34–38 form a cross-link, lanthionine (Ser-Cys); it reads SKAVC. Cross-links (beta-methyllanthionine (Thr-Cys)) lie at residues 40-43, 42-45, and 46-49; these read TLTC, TCIC, and TGSC. A cross-link (lanthionine (Ser-Cys)) is located at residues 48-52; it reads SCSNC. 2,3-didehydroalanine (Ser) is present on Ser-50.

Post-translationally, maturation of lantibiotics involves the enzymatic conversion of Thr, and Ser into dehydrated AA and the formation of thioether bonds with cysteine. This is followed by membrane translocation and cleavage of the modified precursor. The structure of the 2,3-didehydrobutyrines is not discussed in PubMed:17071789.

It is found in the secreted. Lanthionine-containing peptide antibiotic (lantibiotic) active on Gram-positive bacteria. The bactericidal activity of lantibiotics is based on depolarization of energized bacterial cytoplasmic membranes, initiated by the formation of aqueous transmembrane pores. Lacks antibacterial activity against Gram-negative bacteria. In Paenibacillus polymyxa (Bacillus polymyxa), this protein is Lantibiotic paenibacillin.